The primary structure comprises 244 residues: uncharacterized protein (244 aa).

The segment at 1 to 127 (MSGPQGSDPR…YPGQYGPYGQ (127 aa)) is disordered. A compositionally biased stretch (polar residues) spans 34 to 43 (WQQQPTQEAT). Composition is skewed to low complexity over residues 45–75 (QAPA…YAQP) and 88–127 (PGQY…PYGQ). A helical transmembrane segment spans residues 136 to 156 (VAVIGGVIAVMAVLFIGAVLI).

It localises to the membrane. This is an uncharacterized protein from Mycobacterium tuberculosis (strain CDC 1551 / Oshkosh).